Reading from the N-terminus, the 426-residue chain is Mannose-1-phosphate guanyltransferase alpha-B (426 aa).

Belongs to the transferase hexapeptide repeat family.

The catalysed reaction is alpha-D-mannose 1-phosphate + GTP + H(+) = GDP-alpha-D-mannose + diphosphate. The protein operates within nucleotide-sugar biosynthesis; GDP-alpha-D-mannose biosynthesis; GDP-alpha-D-mannose from alpha-D-mannose 1-phosphate (GTP route): step 1/1. The polypeptide is Mannose-1-phosphate guanyltransferase alpha-B (gmppa-b) (Xenopus laevis (African clawed frog)).